Here is a 414-residue protein sequence, read N- to C-terminus: CinA-like protein (414 aa).

Belongs to the CinA family.

In Geobacter sp. (strain M21), this protein is CinA-like protein.